The sequence spans 159 residues: MEQSHQNLQSQFFIEHILQILPHRYPMLLVDRIIELQANQKIVAYKNITFNEDVFNGHFPNKPIFPGVLIVEGMAQTGGFLAFTSLWGFDPEIAKTKIVYFMTIDKVKFRIPVTPGDRLEYHLEVLKHKGMIWQVGGTAQVDGKVVAEAELKAMIAERE.

Histidine 58 is a catalytic residue.

Belongs to the thioester dehydratase family. FabZ subfamily.

The protein localises to the cytoplasm. It catalyses the reaction a (3R)-hydroxyacyl-[ACP] = a (2E)-enoyl-[ACP] + H2O. Involved in unsaturated fatty acids biosynthesis. Catalyzes the dehydration of short chain beta-hydroxyacyl-ACPs and long chain saturated and unsaturated beta-hydroxyacyl-ACPs. This chain is 3-hydroxyacyl-[acyl-carrier-protein] dehydratase FabZ, found in Helicobacter pylori (strain J99 / ATCC 700824) (Campylobacter pylori J99).